The sequence spans 190 residues: Adenylate kinase (190 aa).

Gly-11–Thr-16 provides a ligand contact to ATP. Residues Ser-31–Val-60 are NMP. Residues Thr-32, Arg-37, Gln-58–Val-60, Gly-86–Arg-89, and Gln-93 contribute to the AMP site. Residues Glu-127–Asp-137 are LID. Residue Arg-128 coordinates ATP. AMP-binding residues include Arg-134 and Arg-145. Gly-173 is a binding site for ATP.

Belongs to the adenylate kinase family. In terms of assembly, monomer.

Its subcellular location is the cytoplasm. It carries out the reaction AMP + ATP = 2 ADP. Its pathway is purine metabolism; AMP biosynthesis via salvage pathway; AMP from ADP: step 1/1. Catalyzes the reversible transfer of the terminal phosphate group between ATP and AMP. Plays an important role in cellular energy homeostasis and in adenine nucleotide metabolism. The polypeptide is Adenylate kinase (Parabacteroides distasonis (strain ATCC 8503 / DSM 20701 / CIP 104284 / JCM 5825 / NCTC 11152)).